A 1243-amino-acid chain; its full sequence is Zinc finger protein ZFAT (1243 aa).

The C2H2-type 1 zinc-finger motif lies at 12–35 (FMCKCCNLFSPNQSELLSHVSEKH). Disordered stretches follow at residues 51–116 (PLST…PSSL) and 147–189 (GEAG…GKEA). Positions 70–81 (MKRKRGRPKGST) are enriched in basic residues. The segment at 116-141 (LECSKCCRKFSNTRQLRKHICIIVLN) adopts a C2H2-type 2; degenerate zinc-finger fold. Over residues 156-189 (ELEKKCKEDDREKASKRPRSQKTEKVQKISGKEA) the composition is skewed to basic and acidic residues. 7 consecutive C2H2-type zinc fingers follow at residues 271–293 (FTCEYCNKVFKFKHSLQAHLRIH), 299–321 (YKCPQCSYASAIKANLNVHLRKH), 326–349 (FACDYCSFTCLSKGHLKVHIERVH), 354–377 (QHCRFCKKKYSDVKNLIKHIRDAH), 404–426 (YDCHICERKFKNELDRDRHMLVH), 432–454 (FACELCGHGATKYQALELHVRKH), and 458–481 (YVCAVCRKKFVSSIRLRTHIKEVH). The Zn(2+) site is built by C273, C276, H289, H293, C301, C304, H317, H321, C328, C331, H344, H349, C356, C359, H372, H377, C406, C409, H422, and H426. Zn(2+) contacts are provided by C460, C463, H476, and H481. Disordered regions lie at residues 534–570 (EACPGDTQLEEGRKEPEAPGEMPAPAVHLASPQAEST), 603–625 (TSSAEAHAAPEKPPDMQHRSSVQ), and 638–705 (AQSA…CKAA). Over residues 610 to 620 (AAPEKPPDMQH) the composition is skewed to basic and acidic residues. The segment covering 638-650 (AQSAGSDQESHGA) has biased composition (polar residues). 10 C2H2-type zinc fingers span residues 742 to 764 (LECEYCGKLFWYQVHFDMHVRTH), 770 to 793 (YYCSQCHYSSITKNCLKRHVIQKH), 798 to 822 (LKCPTDGCDYSTPDKYKLQAHLKVH), 830 to 853 (YSCPVCEKSFSEDRLIKSHIKTNH), 880 to 903 (MKCPYCDFYFMKNGSDLQRHIWAH), 909 to 931 (FKCSLCEYATRSKSNLKAHMNRH), 937 to 959 (HLCDMCGKKFKSKGTLKSHKLLH), 966 to 988 (FKCTVCDYTAAQKPQLLRHMEQH), 994 to 1017 (FRCAHCHYSCNISGSLKRHYNRKH), and 1041 to 1064 (LKCPVCSFVYGTKWEFNRHLKNKH). Zn(2+) is bound by residues C772, C775, H788, H793, C800, C805, H818, H822, C832, C835, H848, H853, C882, C885, H899, H903, C911, C914, H927, H931, C939, C942, H955, and L958.

As to expression, isoform 1 is strongly expressed in placenta, spleen, kidney, testis and peripheral blood leukocytes. Expressed in CD4+ and CD8+ T-cells, CD19+ B-cells and CB14+ monocytes. Isoform 3 is strongly expressed in placenta, ovary, tonsil, CD19+ B-cells and CD14+ monocytes.

It localises to the nucleus. The protein localises to the cytoplasm. Its subcellular location is the cytosol. Its function is as follows. May be involved in transcriptional regulation. Overexpression causes down-regulation of a number of genes involved in the immune response. Some genes are also up-regulated. The protein is Zinc finger protein ZFAT (ZFAT) of Homo sapiens (Human).